The sequence spans 657 residues: Glycogen debranching enzyme (657 aa).

Aspartate 336 functions as the Nucleophile in the catalytic mechanism. The active-site Proton donor is the glutamate 371. The span at 458-467 (NEANGEENRD) shows a compositional bias: basic and acidic residues. Positions 458–479 (NEANGEENRDGTNNNYSNNHGK) are disordered.

Belongs to the glycosyl hydrolase 13 family.

The catalysed reaction is Hydrolysis of (1-&gt;6)-alpha-D-glucosidic linkages to branches with degrees of polymerization of three or four glucose residues in limit dextrin.. It participates in glycan degradation; glycogen degradation. Its function is as follows. Removes maltotriose and maltotetraose chains that are attached by 1,6-alpha-linkage to the limit dextrin main chain, generating a debranched limit dextrin. In Shigella sonnei (strain Ss046), this protein is Glycogen debranching enzyme.